Consider the following 480-residue polypeptide: Glutamyl-tRNA(Gln) amidotransferase subunit A (480 aa).

Residues lysine 74 and serine 149 each act as charge relay system in the active site. Residue serine 173 is the Acyl-ester intermediate of the active site.

It belongs to the amidase family. GatA subfamily. In terms of assembly, heterotrimer of A, B and C subunits.

The catalysed reaction is L-glutamyl-tRNA(Gln) + L-glutamine + ATP + H2O = L-glutaminyl-tRNA(Gln) + L-glutamate + ADP + phosphate + H(+). Functionally, allows the formation of correctly charged Gln-tRNA(Gln) through the transamidation of misacylated Glu-tRNA(Gln) in organisms which lack glutaminyl-tRNA synthetase. The reaction takes place in the presence of glutamine and ATP through an activated gamma-phospho-Glu-tRNA(Gln). In Ruthia magnifica subsp. Calyptogena magnifica, this protein is Glutamyl-tRNA(Gln) amidotransferase subunit A.